The sequence spans 552 residues: Leucine-rich repeat-containing protein 56 (552 aa).

LRR repeat units follow at residues 94 to 115, 117 to 138, 139 to 160, 161 to 182, and 186 to 206; these read NLIQLKLNHSYLGSLRDLGTSL, HLQVLWLARCGLTDLDGIGSFL, ELKELYVSYNNISDLSPLCLLE, QLEVLDLEGNNVEDLGQMRYLQ, and RLAMLTLEGNLVCLKPDPGPS. 2 disordered regions span residues 348 to 375 and 401 to 435; these read APLEQMPPHRPDLAIRPSTPRPDPAESC and QQERSAQVQAQDPQKDPVEQEDQTGPKTSLTPPRL.

Belongs to the LRRC56 family. Interacts with IFT88.

The protein resides in the cell projection. It is found in the cilium. In terms of biological role, required for the assembly of dynein arms. The chain is Leucine-rich repeat-containing protein 56 (Lrrc56) from Mus musculus (Mouse).